The sequence spans 203 residues: SPbeta prophage-derived uncharacterized lipoprotein YonS (203 aa).

The signal sequence occupies residues 1-21 (MKLFKKLGILLLITSLILLAA). C22 is lipidated: N-palmitoyl cysteine. A lipid anchor (S-diacylglycerol cysteine) is attached at C22. Low complexity predominate over residues 27-46 (ESSSSSEDTNNATDTNTSES). The interval 27–57 (ESSSSSEDTNNATDTNTSESQDISVNGPEKV) is disordered.

It is found in the cell membrane. This Bacillus subtilis (strain 168) protein is SPbeta prophage-derived uncharacterized lipoprotein YonS (yonS).